The sequence spans 138 residues: Small ribosomal subunit protein uS11 (138 aa).

A compositionally biased stretch (low complexity) spans 1–12 (MPPKKANAAGPK). Residues 1–23 (MPPKKANAAGPKKGQKTRKREKK) form a disordered region. The segment covering 13–22 (KGQKTRKREK) has biased composition (basic residues).

It belongs to the universal ribosomal protein uS11 family. In terms of assembly, part of the 30S ribosomal subunit. Interacts with proteins S7 and S18. Binds to IF-3.

Functionally, located on the platform of the 30S subunit, it bridges several disparate RNA helices of the 16S rRNA. Forms part of the Shine-Dalgarno cleft in the 70S ribosome. This is Small ribosomal subunit protein uS11 from Mycobacterium leprae (strain Br4923).